A 77-amino-acid polypeptide reads, in one-letter code: U8-lycotoxin-Ls1t (77 aa).

Positions 1–20 are cleaved as a signal peptide; the sequence is MKLIIFTGLVLFAIVSLIEA. Positions 21-26 are excised as a propeptide; that stretch reads QAENEK.

This sequence belongs to the neurotoxin 19 (CSTX) family. 08 (U8-Lctx) subfamily. Contains 4 disulfide bonds. As to expression, expressed by the venom gland.

It localises to the secreted. The protein is U8-lycotoxin-Ls1t of Lycosa singoriensis (Wolf spider).